A 612-amino-acid polypeptide reads, in one-letter code: Dihydroxy-acid dehydratase (612 aa).

Mg(2+) is bound at residue Asp81. Cys122 contributes to the [2Fe-2S] cluster binding site. Positions 123 and 124 each coordinate Mg(2+). Residue Lys124 is modified to N6-carboxylysine. Cys193 is a [2Fe-2S] cluster binding site. Glu489 is a Mg(2+) binding site. The active-site Proton acceptor is the Ser515.

Belongs to the IlvD/Edd family. As to quaternary structure, homodimer. [2Fe-2S] cluster serves as cofactor. It depends on Mg(2+) as a cofactor.

It catalyses the reaction (2R)-2,3-dihydroxy-3-methylbutanoate = 3-methyl-2-oxobutanoate + H2O. The catalysed reaction is (2R,3R)-2,3-dihydroxy-3-methylpentanoate = (S)-3-methyl-2-oxopentanoate + H2O. It participates in amino-acid biosynthesis; L-isoleucine biosynthesis; L-isoleucine from 2-oxobutanoate: step 3/4. It functions in the pathway amino-acid biosynthesis; L-valine biosynthesis; L-valine from pyruvate: step 3/4. Functions in the biosynthesis of branched-chain amino acids. Catalyzes the dehydration of (2R,3R)-2,3-dihydroxy-3-methylpentanoate (2,3-dihydroxy-3-methylvalerate) into 2-oxo-3-methylpentanoate (2-oxo-3-methylvalerate) and of (2R)-2,3-dihydroxy-3-methylbutanoate (2,3-dihydroxyisovalerate) into 2-oxo-3-methylbutanoate (2-oxoisovalerate), the penultimate precursor to L-isoleucine and L-valine, respectively. The chain is Dihydroxy-acid dehydratase from Xanthomonas oryzae pv. oryzae (strain MAFF 311018).